Consider the following 156-residue polypeptide: Transcription elongation factor GreA (156 aa).

A coiled-coil region spans residues 1–32 (MKKVRLTREGYEKLKKELEDLKRKFMYEISER).

It belongs to the GreA/GreB family.

Necessary for efficient RNA polymerase transcription elongation past template-encoded arresting sites. The arresting sites in DNA have the property of trapping a certain fraction of elongating RNA polymerases that pass through, resulting in locked ternary complexes. Cleavage of the nascent transcript by cleavage factors such as GreA or GreB allows the resumption of elongation from the new 3'terminus. GreA releases sequences of 2 to 3 nucleotides. The chain is Transcription elongation factor GreA from Thermotoga maritima (strain ATCC 43589 / DSM 3109 / JCM 10099 / NBRC 100826 / MSB8).